The primary structure comprises 543 residues: CTP synthase (543 aa).

Residues M1–L267 form an amidoligase domain region. S13 is a binding site for CTP. S13 contributes to the UTP binding site. ATP is bound by residues S14–I19 and D71. Residues D71 and E141 each coordinate Mg(2+). Residues D148 to E150, K188 to Q193, and K224 each bind CTP. UTP contacts are provided by residues K188 to Q193 and K224. The Glutamine amidotransferase type-1 domain maps to E292–R534. An L-glutamine-binding site is contributed by G354. Residue C381 is the Nucleophile; for glutamine hydrolysis of the active site. L-glutamine-binding positions include L382–Q385, E405, and R462. Active-site residues include H507 and E509.

This sequence belongs to the CTP synthase family. Homotetramer.

It catalyses the reaction UTP + L-glutamine + ATP + H2O = CTP + L-glutamate + ADP + phosphate + 2 H(+). The enzyme catalyses L-glutamine + H2O = L-glutamate + NH4(+). The catalysed reaction is UTP + NH4(+) + ATP = CTP + ADP + phosphate + 2 H(+). Its pathway is pyrimidine metabolism; CTP biosynthesis via de novo pathway; CTP from UDP: step 2/2. Its activity is regulated as follows. Allosterically activated by GTP, when glutamine is the substrate; GTP has no effect on the reaction when ammonia is the substrate. The allosteric effector GTP functions by stabilizing the protein conformation that binds the tetrahedral intermediate(s) formed during glutamine hydrolysis. Inhibited by the product CTP, via allosteric rather than competitive inhibition. Functionally, catalyzes the ATP-dependent amination of UTP to CTP with either L-glutamine or ammonia as the source of nitrogen. Regulates intracellular CTP levels through interactions with the four ribonucleotide triphosphates. The protein is CTP synthase of Thermosynechococcus vestitus (strain NIES-2133 / IAM M-273 / BP-1).